Reading from the N-terminus, the 362-residue chain is Cyclic di-GMP phosphodiesterase PdeL (362 aa).

One can recognise an HTH luxR-type domain in the interval 18 to 83; it reads HLSLPGSVSE…TFWRDIFFQY (66 aa). The segment at residues 42–61 is a DNA-binding region (H-T-H motif); the sequence is VTEISQYRNRSAKTISHQKK. One can recognise an EAL domain in the interval 106–360; it reads HIVTPEAISL…KFISEWVMKA (255 aa). Residue Gln127 participates in substrate binding. A Mg(2+)-binding site is contributed by Glu141. Substrate contacts are provided by residues 144 to 145 and Asn200; that span reads VR. Mg(2+)-binding residues include Asn200, Glu232, and Asp262. Substrate-binding positions include Asp262, Lys286, 319–322, and Tyr341; that span reads EGVE.

In terms of assembly, is in a fast thermodynamic monomer-homodimer equilibrium. Dimerization is required for PDE activity. Dimerization affinity is increased about 100-fold upon substrate binding. Mg(2+) is required as a cofactor. Mn(2+) serves as cofactor.

The enzyme catalyses 3',3'-c-di-GMP + H2O = 5'-phosphoguanylyl(3'-&gt;5')guanosine + H(+). Strongly inhibited by Ca(2+). Functionally, acts both as an enzyme and as a c-di-GMP sensor to couple transcriptional activity to the c-di-GMP status of the cell. Phosphodiesterase (PDE) that catalyzes the hydrolysis of cyclic-di-GMP (c-di-GMP) to 5'-pGpG. Also acts as a transcription factor to control its own expression. The chain is Cyclic di-GMP phosphodiesterase PdeL from Escherichia coli (strain K12).